A 485-amino-acid polypeptide reads, in one-letter code: Glutamyl-tRNA(Gln) amidotransferase subunit A (485 aa).

Active-site charge relay system residues include lysine 79 and serine 154. Serine 178 serves as the catalytic Acyl-ester intermediate.

This sequence belongs to the amidase family. GatA subfamily. Heterotrimer of A, B and C subunits.

The catalysed reaction is L-glutamyl-tRNA(Gln) + L-glutamine + ATP + H2O = L-glutaminyl-tRNA(Gln) + L-glutamate + ADP + phosphate + H(+). In terms of biological role, allows the formation of correctly charged Gln-tRNA(Gln) through the transamidation of misacylated Glu-tRNA(Gln) in organisms which lack glutaminyl-tRNA synthetase. The reaction takes place in the presence of glutamine and ATP through an activated gamma-phospho-Glu-tRNA(Gln). In Staphylococcus aureus (strain bovine RF122 / ET3-1), this protein is Glutamyl-tRNA(Gln) amidotransferase subunit A.